A 209-amino-acid chain; its full sequence is Small ribosomal subunit protein uS4 (209 aa).

Positions 99-164 (GRLDSVVYRM…QLRVKAALEA (66 aa)) constitute an S4 RNA-binding domain.

It belongs to the universal ribosomal protein uS4 family. Part of the 30S ribosomal subunit. Contacts protein S5. The interaction surface between S4 and S5 is involved in control of translational fidelity.

Functionally, one of the primary rRNA binding proteins, it binds directly to 16S rRNA where it nucleates assembly of the body of the 30S subunit. In terms of biological role, with S5 and S12 plays an important role in translational accuracy. The protein is Small ribosomal subunit protein uS4 of Aromatoleum aromaticum (strain DSM 19018 / LMG 30748 / EbN1) (Azoarcus sp. (strain EbN1)).